The following is a 262-amino-acid chain: 3-methyl-2-oxobutanoate hydroxymethyltransferase (262 aa).

2 residues coordinate Mg(2+): D44 and D83. 3-methyl-2-oxobutanoate-binding positions include 44–45, D83, and K111; that span reads DS. E113 contacts Mg(2+). Residue E180 is the Proton acceptor of the active site.

The protein belongs to the PanB family. As to quaternary structure, homodecamer; pentamer of dimers. It depends on Mg(2+) as a cofactor.

The protein resides in the cytoplasm. The enzyme catalyses 3-methyl-2-oxobutanoate + (6R)-5,10-methylene-5,6,7,8-tetrahydrofolate + H2O = 2-dehydropantoate + (6S)-5,6,7,8-tetrahydrofolate. It functions in the pathway cofactor biosynthesis; (R)-pantothenate biosynthesis; (R)-pantoate from 3-methyl-2-oxobutanoate: step 1/2. Functionally, catalyzes the reversible reaction in which hydroxymethyl group from 5,10-methylenetetrahydrofolate is transferred onto alpha-ketoisovalerate to form ketopantoate. The protein is 3-methyl-2-oxobutanoate hydroxymethyltransferase of Alcanivorax borkumensis (strain ATCC 700651 / DSM 11573 / NCIMB 13689 / SK2).